Consider the following 126-residue polypeptide: Acyl carrier protein 2, mitochondrial (126 aa).

The N-terminal 36 residues, 1 to 36, are a transit peptide targeting the mitochondrion; the sequence is MAARGAMLRYLRVNVNPTIQNPRECVLPFSILLRRF. In terms of domain architecture, Carrier spans 48–123; that stretch reads SEVTDRVLSV…LAVDFIASHP (76 aa). Position 83 is an O-(pantetheine 4'-phosphoryl)serine (serine 83).

This sequence belongs to the acyl carrier protein (ACP) family. In terms of assembly, complex I is composed of at least 49 different subunits. In terms of processing, 4'-phosphopantetheine is transferred from CoA to a specific serine of the apo-ACP-like protein.

It localises to the mitochondrion. Its pathway is lipid metabolism; fatty acid biosynthesis. Its function is as follows. Carrier of the growing fatty acid chain in fatty acid biosynthesis. May be involved in the synthesis of short and medium chain fatty acids. Accessory and non-catalytic subunit of the mitochondrial membrane respiratory chain NADH dehydrogenase (Complex I), which functions in the transfer of electrons from NADH to the respiratory chain. The chain is Acyl carrier protein 2, mitochondrial (MTACP2) from Arabidopsis thaliana (Mouse-ear cress).